A 632-amino-acid polypeptide reads, in one-letter code: Fem-3 mRNA-binding factor 2 (632 aa).

Positions 1 to 11 (MDQSKMRRTNQ) are enriched in basic residues. The disordered stretch occupies residues 1–37 (MDQSKMRRTNQFRKTSQKPPSTGIDSYPTPAQSPMAQ). Polar residues predominate over residues 12–35 (FRKTSQKPPSTGIDSYPTPAQSPM). Positions 162 to 566 (TRSNNVLPTW…KMIETLANLR (405 aa)) constitute a PUM-HD domain. 8 Pumilio repeats span residues 187-225 (EVLD…QLFE), 226-264 (QVIG…GYTK), 271-307 (NFIS…KLVQ), 308-332 (ALPR…QKVV), 345-384 (DFVA…DLTS), 400-436 (SVTN…CIIE), 438-473 (CLMR…EMMD), and 484-521 (DTGK…RQTK). Residues 609-632 (MLEPRSNKSSVSVKFSSSGSHGDD) are disordered. A compositionally biased stretch (low complexity) spans 615–632 (NKSSVSVKFSSSGSHGDD).

Interacts (via C-terminus) with gld-3 isoform A in an RNA-independent manner. Interacts with dlc-1, and is required for the localization of fbf-2 to P granules. Interacts (via RNA-binding domain) with lst-1, probably displaces bound auto-inhibitory C-terminal tail and alters its RNA-binding affinity. As to expression, expressed specifically in the germline (at protein level).

It is found in the cytoplasm. The protein resides in the cytoplasmic granule. Its function is as follows. RNA-binding protein that binds to the consensus sequence 5'-UGUGCCAUA-3' in mRNA 3'-UTRs. Involved in the control of stem cells and sex determination in the C.elegans hermaphrodite germline. May also play a role in the hermaphrodite germline proliferation and oogenesis. By binding to the 3'-UTR, represses phosphatase lip-1 expression in the distal part of the germline mitotic zone. Binds specifically to the regulatory region of fem-3 3'-UTR and mediates the sperm/oocyte switch. Negatively regulates gld-3 expression possibly by directly binding to two sites within the gld-3 isoform b 3'-UTR. Suppresses germline tumor formation by preventing the dedifferentiation of secondary spermatocytes. C-terminal disordered region probably auto-inhibits RNA binding; auto-inhibition may be reversed by interaction with lst-1. This is Fem-3 mRNA-binding factor 2 from Caenorhabditis elegans.